The sequence spans 261 residues: uncharacterized protein (261 aa).

Helical transmembrane passes span 4–21 and 33–55; these read RLIA…LIVL and FSIL…LVLF.

It localises to the cell membrane. This is an uncharacterized protein from Archaeoglobus fulgidus (strain ATCC 49558 / DSM 4304 / JCM 9628 / NBRC 100126 / VC-16).